The chain runs to 277 residues: Shikimate dehydrogenase (NADP(+)) (277 aa).

Residues 20 to 22 (SLS) and threonine 67 contribute to the shikimate site. The active-site Proton acceptor is the lysine 71. Aspartate 83 is a binding site for NADP(+). Shikimate contacts are provided by asparagine 92 and aspartate 107. Residues 131–135 (GAGGV) and isoleucine 219 contribute to the NADP(+) site. Tyrosine 221 provides a ligand contact to shikimate. An NADP(+)-binding site is contributed by glycine 242.

Belongs to the shikimate dehydrogenase family. In terms of assembly, homodimer.

The catalysed reaction is shikimate + NADP(+) = 3-dehydroshikimate + NADPH + H(+). The protein operates within metabolic intermediate biosynthesis; chorismate biosynthesis; chorismate from D-erythrose 4-phosphate and phosphoenolpyruvate: step 4/7. Its function is as follows. Involved in the biosynthesis of the chorismate, which leads to the biosynthesis of aromatic amino acids. Catalyzes the reversible NADPH linked reduction of 3-dehydroshikimate (DHSA) to yield shikimate (SA). The protein is Shikimate dehydrogenase (NADP(+)) of Pelobacter propionicus (strain DSM 2379 / NBRC 103807 / OttBd1).